The sequence spans 1992 residues: E3 ubiquitin-protein ligase TRIP12 (1992 aa).

Positions 1-10 (MSNRPNNNPG) are enriched in polar residues. Residues 1-398 (MSNRPNNNPG…SGESESDDSE (398 aa)) are disordered. An N-acetylserine modification is found at serine 2. A Phosphoserine modification is found at serine 12. The segment covering 18–27 (RNTAGAQPQD) has biased composition (polar residues). The span at 29 to 43 (SIGGRSCSSSSVVIV) shows a compositional bias: low complexity. The segment covering 48–70 (DPDRANTSEKQKTGQVPKKDNSR) has biased composition (basic and acidic residues). Phosphoserine occurs at positions 77, 85, and 100. A compositionally biased stretch (polar residues) spans 78-88 (PDYNRTNSPSS). Polar residues predominate over residues 154 to 164 (SSCIKSASVSE). 2 stretches are compositionally biased toward low complexity: residues 175-188 (PTKL…SAKA) and 196-215 (SSSA…ASSA). Lysine 181 carries the post-translational modification N6-acetyllysine. Residues 280–290 (PGSSKSETSKP) are compositionally biased toward polar residues. Serine 310 and serine 312 each carry phosphoserine. The segment covering 330–339 (GSCASASRRG) has biased composition (low complexity). Residues 346-358 (GAAEARRQEKMAD) show a composition bias toward basic and acidic residues. Polar residues predominate over residues 362-371 (NQETVNSSAA). The WWE domain maps to 749–836 (MLKKGNAQNT…DPELAKSFIK (88 aa)). The tract at residues 938–1044 (SLLTSPPKAC…QSPKSSFLAS (107 aa)) is disordered. Phosphoserine is present on serine 942. Polar residues predominate over residues 948-960 (TNGSGSLGSTPSV). Over residues 961-973 (NSGTATAATNASA) the composition is skewed to low complexity. 2 positions are modified to phosphoserine: serine 991 and serine 997. The span at 1001 to 1014 (KRKRLPKRGSRRPK) shows a compositional bias: basic residues. Serine 1016 bears the Phosphoserine mark. Residues 1017–1026 (PPRDDDKVDN) are compositionally biased toward basic and acidic residues. A compositionally biased stretch (low complexity) spans 1029 to 1040 (KSPTTTQSPKSS). Phosphoserine is present on residues serine 1030, serine 1317, serine 1322, serine 1329, and serine 1376. The residue at position 1377 (threonine 1377) is a Phosphothreonine. Disordered regions lie at residues 1407 to 1434 (SNKD…AKKH) and 1568 to 1587 (TNPE…PRLD). Position 1425 is an N6-acetyllysine (lysine 1425). A Phosphoserine modification is found at serine 1427. A K-box region spans residues 1496 to 1570 (EIIPTSEFIN…AMQRLLDTNP (75 aa)). The HECT domain maps to 1885–1992 (PDHGYTHDSR…REGQQSFHLS (108 aa)). Cysteine 1959 serves as the catalytic Glycyl thioester intermediate.

It belongs to the UPL family. K-HECT subfamily. Interacts with MYC; leading to disrupt interaction with isoform p19ARF/ARF of CDKN2A. Interacts with TRADD; leading to disrupt interaction with isoform p19ARF/ARF of CDKN2A. Interacts with SMARCC1; leading to disrupt interaction with SMARCE1.

Its subcellular location is the nucleus. The protein resides in the nucleoplasm. It catalyses the reaction S-ubiquitinyl-[E2 ubiquitin-conjugating enzyme]-L-cysteine + [acceptor protein]-L-lysine = [E2 ubiquitin-conjugating enzyme]-L-cysteine + N(6)-ubiquitinyl-[acceptor protein]-L-lysine.. It participates in protein modification; protein ubiquitination. Functionally, E3 ubiquitin-protein ligase involved in ubiquitin fusion degradation (UFD) pathway and regulation of DNA repair. Part of the ubiquitin fusion degradation (UFD) pathway, a process that mediates ubiquitination of protein at their N-terminus, regardless of the presence of lysine residues in target proteins. Acts as a key regulator of DNA damage response by acting as a suppressor of RNF168, an E3 ubiquitin-protein ligase that promotes accumulation of 'Lys-63'-linked histone H2A and H2AX at DNA damage sites, thereby acting as a guard against excessive spreading of ubiquitinated chromatin at damaged chromosomes. In normal cells, mediates ubiquitination and degradation of isoform p19ARF/ARF of CDKN2A, a lysine-less tumor suppressor required for p53/TP53 activation under oncogenic stress. In cancer cells, however, isoform p19ARF/ARF and TRIP12 are located in different cell compartments, preventing isoform p19ARF/ARF ubiquitination and degradation. Does not mediate ubiquitination of isoform p16-INK4a of CDKN2A. Also catalyzes ubiquitination of NAE1 and SMARCE1, leading to their degradation. Ubiquitination and degradation of target proteins is regulated by interaction with proteins such as MYC, TRADD or SMARCC1, which disrupt the interaction between TRIP12 and target proteins. Mediates ubiquitination of ASXL1: following binding to N(6)-methyladenosine methylated DNA, ASXL1 is ubiquitinated by TRIP12, leading to its degradation and subsequent inactivation of the PR-DUB complex. The protein is E3 ubiquitin-protein ligase TRIP12 (TRIP12) of Bos taurus (Bovine).